The primary structure comprises 247 residues: Flagellar brake protein YcgR 2 (247 aa).

The region spanning 124 to 237 is the PilZ domain; it reads QRREYFRVET…DETRIQRYIA (114 aa).

It belongs to the YcgR family. In terms of assembly, monomer. Interacts with the flagellar basal bodies.

The protein localises to the bacterial flagellum basal body. Functionally, acts as a flagellar brake, regulating swimming and swarming in a bis-(3'-5') cyclic diguanylic acid (c-di-GMP)-dependent manner. Binds 1 c-di-GMP dimer per subunit. Increasing levels of c-di-GMP lead to decreased motility. The chain is Flagellar brake protein YcgR 2 from Dechloromonas aromatica (strain RCB).